Consider the following 128-residue polypeptide: uncharacterized protein (128 aa).

Residues 1–50 (MSNEQGKGMGFFGNKGKPASEKKDEKKTKLDLDYKPDLNPSTPYDPTLPV) are disordered. A compositionally biased stretch (basic and acidic residues) spans 18–36 (PASEKKDEKKTKLDLDYKP).

This is an uncharacterized protein from Bacillus anthracis.